A 341-amino-acid polypeptide reads, in one-letter code: Outer membrane protein U (341 aa).

Positions 1 to 21 (MNKTLIALAVSAAAVATGAYA) are cleaved as a signal peptide.

Belongs to the Gram-negative porin family. Homotrimer.

It is found in the cell outer membrane. Functionally, forms pores that allow passive diffusion of small molecules across the outer membrane. In Vibrio cholerae serotype O1 (strain ATCC 39315 / El Tor Inaba N16961), this protein is Outer membrane protein U (ompU).